A 321-amino-acid chain; its full sequence is MGKVSPKDLDSKTSVRKKKLKSSSNKYLKPGALVQLCYSKASAAKSCNELGKKRVPVFDTKSCNDLGKKRVPVFDIKHARNNKMAVEQLNSPKSPLMLSPVNVVKRSTLVRPMKFDDLQVESNNTCKKSPLMLSPMGIVMQNTLLRTPKTPQADPCVSESQLESLPMDLLVKIVCHLHHDQLKAVFHVSQRIRMATILARQYHFNYTTPDRSRQEMLRVMTPVPINRWPFRRGDGNPTMVSSPHTPKAPKHAPRPPSRTKLAEMKQITAVLFQDQTPFPSRCIVPSVLQRPTLFKPMAPKHPRVLFYEDELCQAVAQNNLT.

Basic and acidic residues predominate over residues 1 to 13 (MGKVSPKDLDSKT). The interval 1–23 (MGKVSPKDLDSKTSVRKKKLKSS) is disordered. The F-box domain maps to 159–207 (ESQLESLPMDLLVKIVCHLHHDQLKAVFHVSQRIRMATILARQYHFNYT). Residues 228–258 (WPFRRGDGNPTMVSSPHTPKAPKHAPRPPSR) are disordered.

The protein is F-box protein At4g35930 of Arabidopsis thaliana (Mouse-ear cress).